A 227-amino-acid polypeptide reads, in one-letter code: ATP synthase F(0) complex subunit a (227 aa).

A run of 6 helical transmembrane segments spans residues 12-32 (PCLL…LLLP), 69-89 (WALL…LGLL), 98-118 (QLSM…LTGL), 139-159 (IPAL…ALGV), 170-190 (LLIQ…PSIS), and 196-216 (ILFL…YVFV).

It belongs to the ATPase A chain family. Component of the ATP synthase complex composed at least of ATP5F1A/subunit alpha, ATP5F1B/subunit beta, ATP5MC1/subunit c (homooctomer), MT-ATP6/subunit a, MT-ATP8/subunit 8, ATP5ME/subunit e, ATP5MF/subunit f, ATP5MG/subunit g, ATP5MK/subunit k, ATP5MJ/subunit j, ATP5F1C/subunit gamma, ATP5F1D/subunit delta, ATP5F1E/subunit epsilon, ATP5PF/subunit F6, ATP5PB/subunit b, ATP5PD/subunit d, ATP5PO/subunit OSCP. ATP synthase complex consists of a soluble F(1) head domain (subunits alpha(3) and beta(3)) - the catalytic core - and a membrane F(0) domain - the membrane proton channel (subunits c, a, 8, e, f, g, k and j). These two domains are linked by a central stalk (subunits gamma, delta, and epsilon) rotating inside the F1 region and a stationary peripheral stalk (subunits F6, b, d, and OSCP). Interacts with DNAJC30; interaction is direct.

Its subcellular location is the mitochondrion inner membrane. It catalyses the reaction H(+)(in) = H(+)(out). Functionally, subunit a, of the mitochondrial membrane ATP synthase complex (F(1)F(0) ATP synthase or Complex V) that produces ATP from ADP in the presence of a proton gradient across the membrane which is generated by electron transport complexes of the respiratory chain. ATP synthase complex consist of a soluble F(1) head domain - the catalytic core - and a membrane F(1) domain - the membrane proton channel. These two domains are linked by a central stalk rotating inside the F(1) region and a stationary peripheral stalk. During catalysis, ATP synthesis in the catalytic domain of F(1) is coupled via a rotary mechanism of the central stalk subunits to proton translocation. With the subunit c (ATP5MC1), forms the proton-conducting channel in the F(0) domain, that contains two crucial half-channels (inlet and outlet) that facilitate proton movement from the mitochondrial intermembrane space (IMS) into the matrix. Protons are taken up via the inlet half-channel and released through the outlet half-channel, following a Grotthuss mechanism. In Gallus gallus (Chicken), this protein is ATP synthase F(0) complex subunit a.